A 207-amino-acid chain; its full sequence is ATP-dependent Clp protease proteolytic subunit (207 aa).

Serine 111 functions as the Nucleophile in the catalytic mechanism. Histidine 136 is an active-site residue.

It belongs to the peptidase S14 family. Fourteen ClpP subunits assemble into 2 heptameric rings which stack back to back to give a disk-like structure with a central cavity, resembling the structure of eukaryotic proteasomes.

The protein localises to the cytoplasm. It carries out the reaction Hydrolysis of proteins to small peptides in the presence of ATP and magnesium. alpha-casein is the usual test substrate. In the absence of ATP, only oligopeptides shorter than five residues are hydrolyzed (such as succinyl-Leu-Tyr-|-NHMec, and Leu-Tyr-Leu-|-Tyr-Trp, in which cleavage of the -Tyr-|-Leu- and -Tyr-|-Trp bonds also occurs).. Its function is as follows. Cleaves peptides in various proteins in a process that requires ATP hydrolysis. Has a chymotrypsin-like activity. Plays a major role in the degradation of misfolded proteins. The polypeptide is ATP-dependent Clp protease proteolytic subunit (Psychromonas ingrahamii (strain DSM 17664 / CCUG 51855 / 37)).